Consider the following 403-residue polypeptide: Alkaline protease 1 (403 aa).

Residues 1–21 form the signal peptide; sequence MLSIKRTLLLLGAVLPAVFGA. A propeptide spanning residues 22–125 is cleaved from the precursor; it reads PVQETRRAAQ…QIWYIDALTT (104 aa). Residues 36–120 form the Inhibitor I9 domain; that stretch reads KYIVTFKPGT…HVEEDQIWYI (85 aa). Residues 130 to 403 enclose the Peptidase S8 domain; it reads PWGLGSISHK…PNKLAYNGNA (274 aa). Catalysis depends on charge relay system residues aspartate 162 and histidine 193. N-linked (GlcNAc...) asparagine glycans are attached at residues asparagine 253 and asparagine 307. The active-site Charge relay system is serine 349.

Belongs to the peptidase S8 family.

It localises to the secreted. It catalyses the reaction Hydrolysis of proteins with broad specificity, and of Bz-Arg-OEt &gt; Ac-Tyr-OEt. Does not hydrolyze peptide amides.. Its function is as follows. Secreted alkaline protease that allows assimilation of proteinaceous substrates. The sequence is that of Alkaline protease 1 (alp1) from Neosartorya fischeri (strain ATCC 1020 / DSM 3700 / CBS 544.65 / FGSC A1164 / JCM 1740 / NRRL 181 / WB 181) (Aspergillus fischerianus).